Consider the following 52-residue polypeptide: MEKWQCTVCGYIYDPEVGDPTQNIPPGTKFEDLPDDWVCPDCGVGKDQFEKI.

A Rubredoxin-like domain is found at 1 to 52 (MEKWQCTVCGYIYDPEVGDPTQNIPPGTKFEDLPDDWVCPDCGVGKDQFEKI). The Fe cation site is built by cysteine 6, cysteine 9, cysteine 39, and cysteine 42.

The protein belongs to the rubredoxin family. Requires Fe(3+) as cofactor.

Rubredoxin is a small nonheme, iron protein lacking acid-labile sulfide. Its single Fe, chelated to 4 Cys, functions as an electron acceptor and may also stabilize the conformation of the molecule. In Thermoanaerobacterium thermosaccharolyticum (strain ATCC 7956 / DSM 571 / NCIMB 9385 / NCA 3814 / NCTC 13789 / WDCM 00135 / 2032) (Clostridium thermosaccharolyticum), this protein is Rubredoxin.